A 551-amino-acid polypeptide reads, in one-letter code: Solute carrier family 22 member 6 (551 aa).

Residues 1–23 (MAFNDLLKQVGGVGRFQRIQVTL) lie on the Cytoplasmic side of the membrane. The helical transmembrane segment at 24 to 44 (VVLPLLLMASHNTLQNFTAAI) threads the bilayer. Over 45–135 (PPHHCRPPAH…LVCSHRALRQ (91 aa)) the chain is Extracellular. N-linked (GlcNAc...) asparagine glycans are attached at residues N56, N92, and N113. The helical transmembrane segment at 136 to 156 (LGQSLYMAGVLIGAMVFGYLA) threads the bilayer. The Cytoplasmic segment spans residues 157–164 (DRLGRRKV). Residues 165–187 (LILNYLQTAVSGTCAAFSPNFTV) traverse the membrane as a helical segment. Residues 188–195 (YCTFRLLS) are Extracellular-facing. A helical transmembrane segment spans residues 196–216 (GMSLAGIALNCMTLNVEWMPI). The Cytoplasmic portion of the chain corresponds to 217-224 (HTRAYVGT). Residues 225-245 (LAGYVYSTGQFLLAGVAYAVP) traverse the membrane as a helical segment. Over 246–248 (HWR) the chain is Extracellular. Residues 249 to 269 (YLQLLVSVPFFAFFVYSWFFI) traverse the membrane as a helical segment. The Cytoplasmic segment spans residues 270-337 (ESARWYSTPG…ELLRCPALRH (68 aa)). A helical transmembrane segment spans residues 338 to 358 (LFLCLSLLWFATSFAYYGLVM). Over 359-368 (DLQGFGVSIY) the chain is Extracellular. A helical membrane pass occupies residues 369–389 (LIQVIFGAVDLPAKLVCFLVI). The Cytoplasmic segment spans residues 390-395 (NSLGRR). Residues 396–416 (PAQMASLLLAGICILVNGVIP) traverse the membrane as a helical segment. Over 417–425 (RDQSIVRTS) the chain is Extracellular. A helical membrane pass occupies residues 426-446 (LAVLGKGCLASSFNCIFLYTG). The Cytoplasmic segment spans residues 447–484 (ELYPTMIRQTGLGMGSTMARVGSIVSPLVSMTSELYPS). The helical transmembrane segment at 485 to 505 (LPLFIYGAVPVAASAATALLP) threads the bilayer. Residues 506–551 (ETLGQPLPDTVQDLESRRRGKPRRQQQEQQKQMVPLQASVQEKNGL) lie on the Extracellular side of the membrane. Residues 520–551 (ESRRRGKPRRQQQEQQKQMVPLQASVQEKNGL) form a disordered region.

This sequence belongs to the major facilitator (TC 2.A.1) superfamily. Organic cation transporter (TC 2.A.1.19) family. In terms of processing, glycosylated. Glycosylation is necessary for proper targeting of the transporter to the plasma membrane.

It localises to the basolateral cell membrane. Its subcellular location is the basal cell membrane. The catalysed reaction is (6R)-L-erythro-5,6,7,8-tetrahydrobiopterin(out) + a dicarboxylate(in) = (6R)-L-erythro-5,6,7,8-tetrahydrobiopterin(in) + a dicarboxylate(out). It carries out the reaction L-erythro-7,8-dihydrobiopterin(out) + a dicarboxylate(in) = L-erythro-7,8-dihydrobiopterin(in) + a dicarboxylate(out). It catalyses the reaction L-sepiapterin(out) + a dicarboxylate(in) = L-sepiapterin(in) + a dicarboxylate(out). The enzyme catalyses prostaglandin F2alpha(out) + a dicarboxylate(in) = prostaglandin F2alpha(in) + a dicarboxylate(out). The catalysed reaction is prostaglandin E2(out) + a dicarboxylate(in) = prostaglandin E2(in) + a dicarboxylate(out). It carries out the reaction 3',5'-cyclic AMP(out) + a dicarboxylate(in) = 3',5'-cyclic AMP(in) + a dicarboxylate(out). It catalyses the reaction 3',5'-cyclic GMP(out) + a dicarboxylate(in) = 3',5'-cyclic GMP(in) + a dicarboxylate(out). The enzyme catalyses urate(out) + a dicarboxylate(in) = urate(in) + a dicarboxylate(out). The catalysed reaction is kynurenate(out) + glutarate(in) = kynurenate(in) + glutarate(out). It carries out the reaction (indol-3-yl)acetate(out) + a dicarboxylate(in) = (indol-3-yl)acetate(in) + a dicarboxylate(out). It catalyses the reaction indoxyl sulfate(out) + a dicarboxylate(in) = indoxyl sulfate(in) + a dicarboxylate(out). The enzyme catalyses N-benzoylglycine(out) + a dicarboxylate(in) = N-benzoylglycine(in) + a dicarboxylate(out). The catalysed reaction is 3-carboxy-4-methyl-5-propyl-2-furanpropanoate(out) + a dicarboxylate(in) = 3-carboxy-4-methyl-5-propyl-2-furanpropanoate(in) + a dicarboxylate(out). In terms of biological role, secondary active transporter that functions as a Na(+)-independent organic anion (OA)/dicarboxylate antiporter where the uptake of one molecule of OA into the cell is coupled with an efflux of one molecule of intracellular dicarboxylate such as 2-oxoglutarate or glutarate. Mediates the uptake of OA across the basolateral side of proximal tubule epithelial cells, thereby contributing to the renal elimination of endogenous OA from the systemic circulation into the urine. Functions as a biopterin transporters involved in the uptake and the secretion of coenzymes tetrahydrobiopterin (BH4), dihydrobiopterin (BH2) and sepiapterin to urine, thereby determining baseline levels of blood biopterins. Transports prostaglandin E2 (PGE2) and prostaglandin F2-alpha (PGF2-alpha) and may contribute to their renal excretion. Also mediates the uptake of cyclic nucleotides such as cAMP and cGMP. Involved in the transport of neuroactive tryptophan metabolites kynurenate (KYNA) and xanthurenate (XA) and may contribute to their secretion from the brain. May transport glutamate. Also involved in the disposition of uremic toxins and potentially toxic xenobiotics by the renal organic anion secretory pathway, helping reduce their undesired toxicological effects on the body. Uremic toxins include the indoxyl sulfate (IS), hippurate/N-benzoylglycine (HA), indole acetate (IA), 3-carboxy-4- methyl-5-propyl-2-furanpropionate (CMPF) and urate. Xenobiotics include the mycotoxin ochratoxin (OTA). May also contribute to the transport of organic compounds in testes across the blood-testis-barrier. May also work as a bidirectional OA/dicarboxylate exchanger. This Oryctolagus cuniculus (Rabbit) protein is Solute carrier family 22 member 6.